The following is a 118-amino-acid chain: DLTQFGNMINKMGQSVFDYIYYGCYCGWGGKGKPIDATDRCCFVHDCCYGKMGTYDTKWTSYNYEIQNGGIDCDEDPQKKELCECDRVAAICFANNRNTYNSNYFGHSSSKCTGTEQC.

Ca(2+) contacts are provided by Tyr-25, Gly-27, and Gly-29. His-45 is an active-site residue. Asp-46 is a Ca(2+) binding site. The active site involves Asp-86.

Belongs to the phospholipase A2 family. Group II subfamily. D49 sub-subfamily. Ca(2+) serves as cofactor. In terms of processing, six disulfide bonds are present. Expressed by the venom gland.

Its subcellular location is the secreted. It catalyses the reaction a 1,2-diacyl-sn-glycero-3-phosphocholine + H2O = a 1-acyl-sn-glycero-3-phosphocholine + a fatty acid + H(+). Functionally, PLA2 catalyzes the calcium-dependent hydrolysis of the 2-acyl groups in 3-sn-phosphoglycerides. The chain is Acidic phospholipase A2 from Bitis gabonica (Gaboon adder).